The primary structure comprises 241 residues: Uracil-DNA glycosylase (241 aa).

The active-site Proton acceptor is the aspartate 68.

Belongs to the uracil-DNA glycosylase (UDG) superfamily. UNG family.

Its subcellular location is the cytoplasm. It carries out the reaction Hydrolyzes single-stranded DNA or mismatched double-stranded DNA and polynucleotides, releasing free uracil.. In terms of biological role, excises uracil residues from the DNA which can arise as a result of misincorporation of dUMP residues by DNA polymerase or due to deamination of cytosine. The protein is Uracil-DNA glycosylase of Sinorhizobium medicae (strain WSM419) (Ensifer medicae).